A 292-amino-acid polypeptide reads, in one-letter code: MEGKEEDVRLGANKFSERQPIGTAAQGAGAGDDDKDYKEPPPAPLFEPGELKSWSFYRAGIAEFVATFLFLYITVLTVMGVSKSTSKCATVGIQGIAWSFGGMIFALVYCTAGISGGHINPAVTFGLFLARKLSLTRAIFYIIMQCLGAICGAGVVKGFQQGLYMGNGGGANVVAPGYTKGDGLGAEIVGTFILVYTVFSATDAKRNARDSHVPILAPLPIGFAVFLVHLATIPITGTGINPARSLGAAIIYNRDHAWSDHWIFWVGPFIGAALAAIYHQVIIRAIPFKSRS.

Residues 1 to 42 (MEGKEEDVRLGANKFSERQPIGTAAQGAGAGDDDKDYKEPPP) form a disordered region. Helical transmembrane passes span 61 to 81 (IAEF…VMGV) and 96 to 118 (IAWS…SGGH). Residues 120 to 122 (NPA) carry the NPA 1 motif. Transmembrane regions (helical) follow at residues 139–159 (IFYI…VKGF), 181–201 (GDGL…VFSA), and 215–235 (ILAP…TIPI). The NPA 2 motif lies at 241 to 243 (NPA). The helical transmembrane segment at 263–283 (IFWVGPFIGAALAAIYHQVII) threads the bilayer.

The protein belongs to the MIP/aquaporin (TC 1.A.8) family. PIP (TC 1.A.8.11) subfamily.

Its subcellular location is the cell membrane. Functionally, aquaporins facilitate the transport of water and small neutral solutes across cell membranes. This chain is Aquaporin PIP1-3/PIP1-4 (PIP1-3), found in Zea mays (Maize).